The sequence spans 102 residues: Large ribosomal subunit protein bL21 (102 aa).

Belongs to the bacterial ribosomal protein bL21 family. Part of the 50S ribosomal subunit. Contacts protein L20.

This protein binds to 23S rRNA in the presence of protein L20. The protein is Large ribosomal subunit protein bL21 of Sulfurimonas denitrificans (strain ATCC 33889 / DSM 1251) (Thiomicrospira denitrificans (strain ATCC 33889 / DSM 1251)).